The primary structure comprises 102 residues: RNA-binding protein Hfq (102 aa).

The Sm domain maps to 9-68; that stretch reads DPFLNALRRERVPVSIYLVNGIKLQGQIESFDQFVILLKNTVSQMVYKHAISTVVPSRPV. The interval 63 to 102 is disordered; that stretch reads VPSRPVSHHSNNAGGGTSSNYHHGSSPQNTSAQQDSEETE. The segment covering 70-96 has biased composition (polar residues); that stretch reads HHSNNAGGGTSSNYHHGSSPQNTSAQQ.

It belongs to the Hfq family. Homohexamer.

RNA chaperone that binds small regulatory RNA (sRNAs) and mRNAs to facilitate mRNA translational regulation in response to envelope stress, environmental stress and changes in metabolite concentrations. Also binds with high specificity to tRNAs. In Shigella dysenteriae serotype 1 (strain Sd197), this protein is RNA-binding protein Hfq.